A 269-amino-acid chain; its full sequence is Phosphonates import ATP-binding protein PhnC (269 aa).

One can recognise an ABC transporter domain in the interval 2–245; it reads LVVEGLTCRF…VARELYDLEA (244 aa). ATP is bound at residue 34–41; that stretch reads GRSGAGKS.

The protein belongs to the ABC transporter superfamily. Phosphonates importer (TC 3.A.1.9.1) family. As to quaternary structure, the complex is composed of two ATP-binding proteins (PhnC), two transmembrane proteins (PhnE) and a solute-binding protein (PhnD).

The protein localises to the cell inner membrane. The enzyme catalyses phosphonate(out) + ATP + H2O = phosphonate(in) + ADP + phosphate + H(+). In terms of biological role, part of the ABC transporter complex PhnCDE involved in phosphonates import. Responsible for energy coupling to the transport system. The protein is Phosphonates import ATP-binding protein PhnC of Bradyrhizobium diazoefficiens (strain JCM 10833 / BCRC 13528 / IAM 13628 / NBRC 14792 / USDA 110).